Here is a 465-residue protein sequence, read N- to C-terminus: Chromosomal replication initiator protein DnaA (465 aa).

The tract at residues 1-87 is domain I, interacts with DnaA modulators; sequence MLWTDCLTRL…RPGSILSSSE (87 aa). The disordered stretch occupies residues 81 to 123; sequence SILSSSEQPATTTAALQTAPIPQPAKVKREPEPVANTAVSSKS. Residues 88 to 100 show a composition bias toward low complexity; the sequence is QPATTTAALQTAP. Positions 88–127 are domain II; sequence QPATTTAALQTAPIPQPAKVKREPEPVANTAVSSKSSKKK. The tract at residues 128–345 is domain III, AAA+ region; the sequence is LLNPQFTFSL…GALNKVVAIS (218 aa). 4 residues coordinate ATP: Gly173, Gly175, Lys176, and Thr177. The segment at 346–465 is domain IV, binds dsDNA; sequence RFKGAPIDLD…YKNLLRLLQS (120 aa).

This sequence belongs to the DnaA family. In terms of assembly, oligomerizes as a right-handed, spiral filament on DNA at oriC.

The protein resides in the cytoplasm. Functionally, plays an essential role in the initiation and regulation of chromosomal replication. ATP-DnaA binds to the origin of replication (oriC) to initiate formation of the DNA replication initiation complex once per cell cycle. Binds the DnaA box (a 9 base pair repeat at the origin) and separates the double-stranded (ds)DNA. Forms a right-handed helical filament on oriC DNA; dsDNA binds to the exterior of the filament while single-stranded (ss)DNA is stabiized in the filament's interior. The ATP-DnaA-oriC complex binds and stabilizes one strand of the AT-rich DNA unwinding element (DUE), permitting loading of DNA polymerase. After initiation quickly degrades to an ADP-DnaA complex that is not apt for DNA replication. Binds acidic phospholipids. The polypeptide is Chromosomal replication initiator protein DnaA (Acinetobacter baumannii (strain AB307-0294)).